A 46-amino-acid polypeptide reads, in one-letter code: Cysteine-rich venom protein asurin-1 (46 aa).

The protein belongs to the CRISP family. Post-translationally, contains 8 disulfide bonds. In terms of tissue distribution, expressed by the venom gland.

It is found in the secreted. Functionally, blocks contraction of smooth muscle elicited by high potassium-induced depolarization, but does not block caffeine-stimulated contraction. May target voltage-gated calcium channels on smooth muscle. The sequence is that of Cysteine-rich venom protein asurin-1 from Austrelaps superbus (Lowland copperhead snake).